The following is a 25-amino-acid chain: Androctonin (25 aa).

Intrachain disulfides connect Cys-4–Cys-20 and Cys-10–Cys-16.

Its subcellular location is the secreted. Active against both bacteria (Gram-positive and Gram-negative) and filamentous fungi. Acts on the membrane of the bacterial cells. It destabilize a membrane by modifying its properties. The sequence is that of Androctonin from Androctonus australis (Sahara scorpion).